We begin with the raw amino-acid sequence, 168 residues long: Mitochondrial inner membrane protein SHH4 (168 aa).

Residues 1–23 (MSSTKFLKPLCRIRAFHTSIARS) constitute a mitochondrion transit peptide. The Mitochondrial matrix portion of the chain corresponds to 24-65 (FTIPFLPKIPQKPGGVSGTANDSSYMPPESRAQGSYHWIVER). The chain crosses the membrane as a helical span at residues 66–86 (GLSLAVLPLIAVPLVTTGPIS). Residues 87 to 92 (TFTDTF) lie on the Mitochondrial intermembrane side of the membrane. A helical membrane pass occupies residues 93 to 113 (LSLVLLGHCHIGFQSCIIDYI). C101 provides a ligand contact to heme. Y112 is a binding site for a ubiquinone. Residues 114–120 (SERVYGK) are Mitochondrial matrix-facing. Residues 121 to 141 (VHHYAMYLLSLGSFLSFVGIY) traverse the membrane as a helical segment. Residues 142–168 (KLESQEAGLIASLKSLWDNKPVEKKRQ) are Mitochondrial intermembrane-facing.

The protein belongs to the CybS family. In terms of assembly, interacts with SDH3.

The protein resides in the mitochondrion inner membrane. Its function is as follows. Homolog of SDH4, but seems not to be a stoichiometric subunit of either the succinate dehydrogenase (SDH) complex or the mitochondrial inner membrane translocase TIM22 complex. The sequence is that of Mitochondrial inner membrane protein SHH4 from Saccharomyces cerevisiae (strain ATCC 204508 / S288c) (Baker's yeast).